The sequence spans 230 residues: uncharacterized protein (230 aa).

This sequence to E.coli HemX N-terminal region.

This is an uncharacterized protein from Haemophilus influenzae (strain ATCC 51907 / DSM 11121 / KW20 / Rd).